A 243-amino-acid polypeptide reads, in one-letter code: Uridylate kinase (243 aa).

Residue 15-18 (KMSG) coordinates ATP. UMP is bound at residue G57. ATP-binding residues include G58 and R62. UMP-binding positions include D77 and 138 to 145 (TGNPLVTT). Residues T165, N166, Y171, and D174 each contribute to the ATP site.

It belongs to the UMP kinase family. Homohexamer.

Its subcellular location is the cytoplasm. It carries out the reaction UMP + ATP = UDP + ADP. The protein operates within pyrimidine metabolism; CTP biosynthesis via de novo pathway; UDP from UMP (UMPK route): step 1/1. With respect to regulation, inhibited by UTP. Its function is as follows. Catalyzes the reversible phosphorylation of UMP to UDP. This Coxiella burnetii (strain RSA 493 / Nine Mile phase I) protein is Uridylate kinase.